A 206-amino-acid chain; its full sequence is Small ribosomal subunit protein eS8 (206 aa).

Residues 1-37 form a disordered region; sequence MGISRDSRHKRSATGAKRAQFRKKRKFELGRQPANTK.

It belongs to the eukaryotic ribosomal protein eS8 family. As to quaternary structure, component of the small ribosomal subunit. Mature ribosomes consist of a small (40S) and a large (60S) subunit. The 40S subunit contains about 32 different proteins and 1 molecule of RNA (18S). The 60S subunit contains 45 different proteins and 3 molecules of RNA (25S, 5.8S and 5S).

It localises to the cytoplasm. Its function is as follows. Component of the ribosome, a large ribonucleoprotein complex responsible for the synthesis of proteins in the cell. The small ribosomal subunit (SSU) binds messenger RNAs (mRNAs) and translates the encoded message by selecting cognate aminoacyl-transfer RNA (tRNA) molecules. The large subunit (LSU) contains the ribosomal catalytic site termed the peptidyl transferase center (PTC), which catalyzes the formation of peptide bonds, thereby polymerizing the amino acids delivered by tRNAs into a polypeptide chain. The nascent polypeptides leave the ribosome through a tunnel in the LSU and interact with protein factors that function in enzymatic processing, targeting, and the membrane insertion of nascent chains at the exit of the ribosomal tunnel. This is Small ribosomal subunit protein eS8 (RPS8A) from Candida albicans (strain SC5314 / ATCC MYA-2876) (Yeast).